Here is a 698-residue protein sequence, read N- to C-terminus: Probable microcin-H47 secretion/processing ATP-binding protein MchF (698 aa).

The Peptidase C39 domain maps to 26–145 (QTETAECGLA…RYFTGIALEV (120 aa)). Cys32 is an active-site residue. Transmembrane regions (helical) follow at residues 33–53 (GLACLAMICGHFGKNIDLISL), 90–110 (LGALKMPCILHWDFSHFVVLV), 289–311 (TCVVGAIMDSIMVVGVFVMMLLY), 315–337 (LTWIVLGFTMVYVLIRLVTYGYY), and 397–417 (LLFGGINTFVAACDQVAILWL). Positions 176-458 (LAKIFCLSVV…LTSFLLQLRI (283 aa)) constitute an ABC transmembrane type-1 domain. Residues 492 to 698 (LETTDLSYRY…LRTVDRIISI (207 aa)) form the ABC transporter domain. 526 to 533 (GASGAGKT) is a binding site for ATP.

It belongs to the ABC transporter superfamily.

It is found in the cell membrane. In terms of biological role, probably involved, in conjunction with MchE, in the secretion of microcin H47. This is Probable microcin-H47 secretion/processing ATP-binding protein MchF (mchF) from Escherichia coli.